A 315-amino-acid polypeptide reads, in one-letter code: 4-hydroxy-3-methylbut-2-enyl diphosphate reductase (315 aa).

Cysteine 12 contacts [4Fe-4S] cluster. Histidine 43 and histidine 81 together coordinate (2E)-4-hydroxy-3-methylbut-2-enyl diphosphate. Residues histidine 43 and histidine 81 each contribute to the dimethylallyl diphosphate site. The isopentenyl diphosphate site is built by histidine 43 and histidine 81. Cysteine 103 contributes to the [4Fe-4S] cluster binding site. Position 131 (histidine 131) interacts with (2E)-4-hydroxy-3-methylbut-2-enyl diphosphate. Histidine 131 provides a ligand contact to dimethylallyl diphosphate. Histidine 131 contributes to the isopentenyl diphosphate binding site. The active-site Proton donor is the glutamate 133. Position 170 (threonine 170) interacts with (2E)-4-hydroxy-3-methylbut-2-enyl diphosphate. [4Fe-4S] cluster is bound at residue cysteine 198. Serine 226, asparagine 228, and serine 271 together coordinate (2E)-4-hydroxy-3-methylbut-2-enyl diphosphate. 3 residues coordinate dimethylallyl diphosphate: serine 226, asparagine 228, and serine 271. Isopentenyl diphosphate is bound by residues serine 226, asparagine 228, and serine 271.

It belongs to the IspH family. The cofactor is [4Fe-4S] cluster.

It catalyses the reaction isopentenyl diphosphate + 2 oxidized [2Fe-2S]-[ferredoxin] + H2O = (2E)-4-hydroxy-3-methylbut-2-enyl diphosphate + 2 reduced [2Fe-2S]-[ferredoxin] + 2 H(+). The enzyme catalyses dimethylallyl diphosphate + 2 oxidized [2Fe-2S]-[ferredoxin] + H2O = (2E)-4-hydroxy-3-methylbut-2-enyl diphosphate + 2 reduced [2Fe-2S]-[ferredoxin] + 2 H(+). Its pathway is isoprenoid biosynthesis; dimethylallyl diphosphate biosynthesis; dimethylallyl diphosphate from (2E)-4-hydroxy-3-methylbutenyl diphosphate: step 1/1. It functions in the pathway isoprenoid biosynthesis; isopentenyl diphosphate biosynthesis via DXP pathway; isopentenyl diphosphate from 1-deoxy-D-xylulose 5-phosphate: step 6/6. Catalyzes the conversion of 1-hydroxy-2-methyl-2-(E)-butenyl 4-diphosphate (HMBPP) into a mixture of isopentenyl diphosphate (IPP) and dimethylallyl diphosphate (DMAPP). Acts in the terminal step of the DOXP/MEP pathway for isoprenoid precursor biosynthesis. In Anoxybacillus flavithermus (strain DSM 21510 / WK1), this protein is 4-hydroxy-3-methylbut-2-enyl diphosphate reductase.